Here is a 437-residue protein sequence, read N- to C-terminus: UDP-N-acetylmuramate--L-alanine ligase (437 aa).

108 to 114 (GAHGKTS) is a binding site for ATP.

This sequence belongs to the MurCDEF family.

The protein localises to the cytoplasm. The enzyme catalyses UDP-N-acetyl-alpha-D-muramate + L-alanine + ATP = UDP-N-acetyl-alpha-D-muramoyl-L-alanine + ADP + phosphate + H(+). It participates in cell wall biogenesis; peptidoglycan biosynthesis. Cell wall formation. In Staphylococcus aureus (strain COL), this protein is UDP-N-acetylmuramate--L-alanine ligase.